The chain runs to 359 residues: Peroxisome assembly protein 12 (359 aa).

Residues 1-24 (MSTTIRASQLASSISPKTEEKQPS) lie on the Peroxisomal matrix side of the membrane. The chain crosses the membrane as a helical span at residues 25–52 (VFDIIAQENLATSIRPALQHLVKYLAFF). Topologically, residues 53 to 56 (KPKT) are cytoplasmic. The chain crosses the membrane as a helical span at residues 57–81 (FLSVHRNFDEYYIIFDLILQNHYLR). At 82–106 (NYGASFTENFYSMKRIASGTGNPPN) the chain is on the peroxisomal matrix side. A helical transmembrane segment spans residues 107–128 (DGRERIMSLITLVGWPYVENKL). Residues 129 to 133 (NQLYD) lie on the Cytoplasmic side of the membrane. The helical transmembrane segment at 134–184 (RLKEVYECRSWSSINGMKAKCQKMFVIIWPYIKTALKAVKSALQLAYILNR) threads the bilayer. Over 185-253 (SSIHSPWLYF…ILGLPGIVSR (69 aa)) the chain is Peroxisomal matrix. A helical membrane pass occupies residues 254–281 (LFAYGLFFVQFLDYMYNTDLAKLTKTGL). Topologically, residues 282–359 (DGAIPSPPHK…NVQHLIRLFV (78 aa)) are cytoplasmic. 4 residues coordinate Zn(2+): C307, C310, C328, and C331. An RING-type; degenerate zinc finger spans residues 307-346 (CPICLKKRVNDTALFVSGYVFCYTCINQYVNTYNKCPVTG).

It belongs to the pex2/pex10/pex12 family. In terms of assembly, component of the PEX2-PEX10-PEX12 retrotranslocation channel.

It localises to the peroxisome membrane. It participates in protein modification; protein ubiquitination. Functionally, component of a retrotranslocation channel required for peroxisome organization by mediating export of the PEX5/prx-5 receptor from peroxisomes to the cytosol, thereby promoting PEX5/prx-5 recycling. The retrotranslocation channel is composed of PEX2/prx-2, PEX10/prx-10 and PEX12/prx-12; each subunit contributing transmembrane segments that coassemble into an open channel that specifically allows the passage of PEX5/prx-5 through the peroxisomal membrane. PEX12/prx-12 also regulates PEX5/prx-5 recycling by activating the E3 ubiquitin-protein ligase activity of PEX10/prx-10. When PEX5 recycling is compromised, PEX12/prx-12 stimulates PEX10-mediated polyubiquitination of PEX5/prx-5, leading to its subsequent degradation. The sequence is that of Peroxisome assembly protein 12 (prx-12) from Caenorhabditis elegans.